We begin with the raw amino-acid sequence, 392 residues long: uncharacterized protein (392 aa).

Residues 1–23 form the signal peptide; it reads MWTALVLVWISSVLLPRSHMMSA. The Extracellular portion of the chain corresponds to 24 to 342; the sequence is EPRNIVTNKW…DALTPSLVNK (319 aa). An N-linked (GlcNAc...) asparagine glycan is attached at asparagine 77. Disordered regions lie at residues 83-154 and 167-320; these read AEVT…PRTA and AAGT…TDSC. A compositionally biased stretch (low complexity) spans 86–97; the sequence is TTHGTNTSTPTT. Composition is skewed to polar residues over residues 107–127 and 170–249; these read SRTL…TRPT and TVNT…SAST. An N-linked (GlcNAc...) asparagine glycan is attached at asparagine 172. Composition is skewed to low complexity over residues 265–277 and 284–309; these read SPTT…LPTQ and TLLT…SRSS. A helical membrane pass occupies residues 343–363; it reads MLLLVVLLVGVTLFIAVLVMF. The Cytoplasmic portion of the chain corresponds to 364 to 392; the sequence is ALQAYESYKKKDYTQVDYLINGMYADSEM.

It localises to the cell membrane. It is found in the golgi apparatus. The protein resides in the trans-Golgi network membrane. This is an uncharacterized protein from Mus musculus (Mouse).